A 206-amino-acid chain; its full sequence is Small ribosomal subunit protein uS4 (206 aa).

One can recognise an S4 RNA-binding domain in the interval 96-156; sequence NRLDNVTYRI…KNSKLQSRIK (61 aa).

It belongs to the universal ribosomal protein uS4 family. In terms of assembly, part of the 30S ribosomal subunit. Contacts protein S5. The interaction surface between S4 and S5 is involved in control of translational fidelity.

Its function is as follows. One of the primary rRNA binding proteins, it binds directly to 16S rRNA where it nucleates assembly of the body of the 30S subunit. In terms of biological role, with S5 and S12 plays an important role in translational accuracy. The sequence is that of Small ribosomal subunit protein uS4 from Buchnera aphidicola subsp. Baizongia pistaciae (strain Bp).